We begin with the raw amino-acid sequence, 327 residues long: GMP reductase (327 aa).

The active-site Thioimidate intermediate is Cys176. Residue 205 to 228 coordinates NADP(+); the sequence is IIADGGIRTHGDIAKSIRFGASMV.

The protein belongs to the IMPDH/GMPR family. GuaC type 2 subfamily.

The catalysed reaction is IMP + NH4(+) + NADP(+) = GMP + NADPH + 2 H(+). Functionally, catalyzes the irreversible NADPH-dependent deamination of GMP to IMP. It functions in the conversion of nucleobase, nucleoside and nucleotide derivatives of G to A nucleotides, and in maintaining the intracellular balance of A and G nucleotides. The protein is GMP reductase of Streptococcus suis (strain 05ZYH33).